Here is a 121-residue protein sequence, read N- to C-terminus: MKTLAAFLLLSCLIAGEVNGQDRSSRARCFCVDKGLNMVLLKNLDKVEIFPPSPSCNKHEIVVTLKNGAGQKCLNPDSKFTKNVVLKAIGKRMQQSVPHSTTTGTVKSSMTSSTSAPTAFK.

Positions 1–20 (MKTLAAFLLLSCLIAGEVNG) are cleaved as a signal peptide. 2 disulfides stabilise this stretch: C29–C56 and C31–C73. Residues 95–121 (QSVPHSTTTGTVKSSMTSSTSAPTAFK) are disordered. Over residues 100 to 115 (STTTGTVKSSMTSSTS) the composition is skewed to low complexity.

It belongs to the intercrine alpha (chemokine CxC) family.

Its subcellular location is the secreted. Ligand for cxcr3.2. Chemotactic for macrophages. In Danio rerio (Zebrafish), this protein is C-X-C motif chemokine 11-6.